Reading from the N-terminus, the 310-residue chain is Malate dehydrogenase (310 aa).

NAD(+) contacts are provided by residues 7-12 and aspartate 32; that span reads GAGNVG. Substrate contacts are provided by arginine 81 and arginine 87. NAD(+)-binding positions include asparagine 94 and 117-119; that span reads VSN. The substrate site is built by asparagine 119 and arginine 150. The Proton acceptor role is filled by histidine 174.

The protein belongs to the LDH/MDH superfamily. MDH type 3 family.

It catalyses the reaction (S)-malate + NAD(+) = oxaloacetate + NADH + H(+). In terms of biological role, catalyzes the reversible oxidation of malate to oxaloacetate. The chain is Malate dehydrogenase from Chlorobium limicola (strain DSM 245 / NBRC 103803 / 6330).